The sequence spans 355 residues: Galectin-9 (355 aa).

2 Galectin domains span residues 17-148 and 227-355; these read FTGM…ISFQ and FFTS…HVQT. A beta-D-galactoside-binding positions include Asn-48, His-61, Arg-65, Asn-75, 82-88, His-267, Arg-271, Thr-281, and 287-293; these read WGTEERK and WGSEERS.

The protein resides in the cytoplasm. Its subcellular location is the nucleus. The protein localises to the secreted. Its function is as follows. Binds galactosides. Has high affinity for the Forssman pentasaccharide. Ligand for HAVCR2/TIM3. Binding to HAVCR2 induces T-helper type 1 lymphocyte (Th1) death. Also stimulates bactericidal activity in infected macrophages by causing macrophage activation and IL1B secretion which restricts intracellular bacterial growth. Ligand for P4HB; the interaction retains P4HB at the cell surface of Th2 T helper cells, increasing disulfide reductase activity at the plasma membrane, altering the plasma membrane redox state and enhancing cell migration. Ligand for CD44; the interaction enhances binding of SMAD3 to the FOXP3 promoter, leading to up-regulation of FOXP3 expression and increased induced regulatory T (iTreg) cell stability and suppressive function. Promotes ability of mesenchymal stromal cells to suppress T-cell proliferation. Expands regulatory T-cells and induces cytotoxic T-cell apoptosis following virus infection. Activates ERK1/2 phosphorylation inducing cytokine (IL-6, IL-8, IL-12) and chemokine (CCL2) production in mast and dendritic cells. Inhibits degranulation and induces apoptosis of mast cells. Induces maturation and migration of dendritic cells. Inhibits natural killer (NK) cell function. Can transform NK cell phenotype from peripheral to decidual during pregnancy. Astrocyte derived galectin-9 enhances microglial TNF production. May play a role in thymocyte-epithelial interactions relevant to the biology of the thymus. May provide the molecular basis for urate flux across cell membranes, allowing urate that is formed during purine metabolism to efflux from cells and serving as an electrogenic transporter that plays an important role in renal and gastrointestinal urate excretion. Highly selective to the anion urate. The sequence is that of Galectin-9 (LGALS9) from Bos taurus (Bovine).